The chain runs to 454 residues: NADP-specific glutamate dehydrogenase (454 aa).

At serine 2 the chain carries N-acetylserine. Lysine 114 is a catalytic residue.

It belongs to the Glu/Leu/Phe/Val dehydrogenases family. As to quaternary structure, homohexamer.

It carries out the reaction L-glutamate + NADP(+) + H2O = 2-oxoglutarate + NH4(+) + NADPH + H(+). The sequence is that of NADP-specific glutamate dehydrogenase (GDH) from Neurospora sitophila (Chrysonilia sitophila).